The chain runs to 321 residues: HPr kinase/phosphorylase (321 aa).

Catalysis depends on residues H143 and K164. 158 to 165 (GKSGVGKS) lines the ATP pocket. Residue S165 coordinates Mg(2+). Catalysis depends on D182, which acts as the Proton acceptor; for phosphorylation activity. Proton donor; for dephosphorylation activity. The important for the catalytic mechanism of both phosphorylation and dephosphorylation stretch occupies residues 206 to 215 (MEIRGLGILN). Mg(2+) is bound at residue E207. Residue R248 is part of the active site. An important for the catalytic mechanism of dephosphorylation region spans residues 269–274 (PVRPGR).

The protein belongs to the HPrK/P family. In terms of assembly, homohexamer. Mg(2+) is required as a cofactor.

It catalyses the reaction [HPr protein]-L-serine + ATP = [HPr protein]-O-phospho-L-serine + ADP + H(+). The enzyme catalyses [HPr protein]-O-phospho-L-serine + phosphate + H(+) = [HPr protein]-L-serine + diphosphate. Functionally, catalyzes the ATP- as well as the pyrophosphate-dependent phosphorylation of a specific serine residue in HPr, a phosphocarrier protein of the phosphoenolpyruvate-dependent sugar phosphotransferase system (PTS). HprK/P also catalyzes the pyrophosphate-producing, inorganic phosphate-dependent dephosphorylation (phosphorolysis) of seryl-phosphorylated HPr (P-Ser-HPr). This chain is HPr kinase/phosphorylase, found in Leptospira interrogans serogroup Icterohaemorrhagiae serovar copenhageni (strain Fiocruz L1-130).